A 273-amino-acid polypeptide reads, in one-letter code: Sulfur carrier protein FdhD (273 aa).

Cysteine 124 (cysteine persulfide intermediate) is an active-site residue. 263–268 contacts Mo-bis(molybdopterin guanine dinucleotide); sequence FCRQSR.

The protein belongs to the FdhD family.

It localises to the cytoplasm. Functionally, required for formate dehydrogenase (FDH) activity. Acts as a sulfur carrier protein that transfers sulfur from IscS to the molybdenum cofactor prior to its insertion into FDH. The polypeptide is Sulfur carrier protein FdhD (Acinetobacter baylyi (strain ATCC 33305 / BD413 / ADP1)).